Consider the following 320-residue polypeptide: Olfactory receptor 12D1 (320 aa).

At 1-23 the chain is on the extracellular side; sequence MLNTTSVTEFLLLGVTDIQELQP. N-linked (GlcNAc...) asparagine glycosylation is present at Asn3. The chain crosses the membrane as a helical span at residues 24–44; the sequence is FLFVVFLTIYFISVAGNGAIL. The Cytoplasmic portion of the chain corresponds to 45 to 55; it reads MIVISDPRLHS. The chain crosses the membrane as a helical span at residues 56-76; the sequence is PMYFFLGNLSCLDICYSSVTL. Residues 77–97 lie on the Extracellular side of the membrane; it reads PKMLQNFLSAHKAISFLGCIS. Cysteines 95 and 177 form a disulfide. A helical membrane pass occupies residues 98-118; that stretch reads QLHFFHFLGSTEAMLLAVMAF. At 119–141 the chain is on the cytoplasmic side; that stretch reads DRFVAICKPLRYTVIMNPQLCTQ. A helical transmembrane segment spans residues 142-162; sequence MAITIWMIGFFHALLHSLMTS. Topologically, residues 163-203 are extracellular; that stretch reads RLNFCGSNRIYHFFCDVKPLLKLACGNTELNQWLLSTVTGT. The helical transmembrane segment at 204 to 224 threads the bilayer; sequence IAMGPFFLTLLSYFYIITHLF. The Cytoplasmic segment spans residues 225–238; it reads FKTHSFSMLRKALS. A helical membrane pass occupies residues 239 to 259; that stretch reads TCASHFMVVILLYAPVLFTYI. Topologically, residues 260 to 270 are extracellular; it reads HHASGTSMDQD. Residues 271 to 291 traverse the membrane as a helical segment; it reads RITAIMYTVVTPVLNPLIYTL. Residues 292-320 lie on the Cytoplasmic side of the membrane; that stretch reads RNKEVKGAFNRAMKRWLWPKEILKNSSEA.

It belongs to the G-protein coupled receptor 1 family.

Its subcellular location is the cell membrane. In terms of biological role, odorant receptor. In Homo sapiens (Human), this protein is Olfactory receptor 12D1 (OR12D1).